An 84-amino-acid chain; its full sequence is Small ribosomal subunit protein uS17 (84 aa).

This sequence belongs to the universal ribosomal protein uS17 family. In terms of assembly, part of the 30S ribosomal subunit.

One of the primary rRNA binding proteins, it binds specifically to the 5'-end of 16S ribosomal RNA. The sequence is that of Small ribosomal subunit protein uS17 from Enterobacter sp. (strain 638).